We begin with the raw amino-acid sequence, 125 residues long: NADH-ubiquinone oxidoreductase chain 1 (125 aa).

3 helical membrane-spanning segments follow: residues 5 to 25 (IFAF…VAFL), 74 to 94 (YLFF…WNFM), and 105 to 125 (LSLL…LGSG).

The protein belongs to the complex I subunit 1 family.

It is found in the mitochondrion inner membrane. It carries out the reaction a ubiquinone + NADH + 5 H(+)(in) = a ubiquinol + NAD(+) + 4 H(+)(out). Functionally, core subunit of the mitochondrial membrane respiratory chain NADH dehydrogenase (Complex I) that is believed to belong to the minimal assembly required for catalysis. Complex I functions in the transfer of electrons from NADH to the respiratory chain. The immediate electron acceptor for the enzyme is believed to be ubiquinone. The chain is NADH-ubiquinone oxidoreductase chain 1 (ND1) from Arbacia lixula (Black urchin).